Here is a 248-residue protein sequence, read N- to C-terminus: MAATLGRDQYVYMAKLAEQAERYEEMVQFMEQLVTGATPAEELTVEERNLLSVAYKNVIGSLRAAWRIVSSIEQKEESRKNDEHVSLVKDYRSKVESELSSVCSGILKLLDSHLIPSAGASESKVFYLKMKGDYHRYMAEFKSGDERKTAAEDTMLAYKAAQDIAAADMAPTHPIRLGLALNFSVFYYEILNSSDKACNMAKQAFEEAIAELDTLGEESYKDSTLIMQLLRDNLTLWTSDMQEQMDEA.

Ser-70, Ser-112, and Ser-193 each carry phosphoserine; by CRPK1. Phosphothreonine; by CRPK1 is present on Thr-214.

Belongs to the 14-3-3 family. Interacts with SERK1 in the cell membrane. Component of the SERK1 signaling complex, composed of KAPP, CDC48A, GRF6 or GRF7, SERK1, SERK2, SERK3/BAK1 and BRI1. Interacts with TPK1. Interacts with ADF1. Binds to CRPK1 at the plasma membrane. Interacts with DREB1A and DREB1B in the nucleus when activated by CRPK1-mediated phosphorylation upon freezing. Interacts with CINV1. Binds to the N-terminal region of B1L. Post-translationally, transphosphorylated by SERK1. Phosphorylated by CRPK1 in response to cold.

The protein resides in the nucleus. It localises to the cell membrane. The protein localises to the cytoplasm. Functionally, is associated with a DNA binding complex that binds to the G box, a well-characterized cis-acting DNA regulatory element found in plant genes. Specific negative regulator of slow-vacuolar (SV) ion channel. Mediates F-actin dynamics possibly through inhibiting ADF1 phosphorylation. Negative regulator of freezing tolerance that modulates cold-responsive C-repeat-binding factors (CBF) DREB1A and DREB1B proteins stability by facilitating their ubiquitin-mediated degradation when activated by CRPK1-mediated phosphorylation in freezing conditions; this processus is counteracted by B1L. In Arabidopsis thaliana (Mouse-ear cress), this protein is 14-3-3-like protein G-BOX factor 14 lambda.